Here is a 760-residue protein sequence, read N- to C-terminus: Prolyl endopeptidase FAP (760 aa).

The Cytoplasmic portion of the chain corresponds to 1-4 (MKTW). The helical; Signal-anchor for type II membrane protein transmembrane segment at 5-25 (VKIVFGVATSAVLALLVMCIV) threads the bilayer. Over 26–760 (LRPSRVHNSE…FLKQCFSLSD (735 aa)) the chain is Extracellular. N-linked (GlcNAc...) asparagine glycosylation is found at asparagine 49, asparagine 92, and asparagine 99. 2 residues coordinate substrate: glutamate 203 and glutamate 204. N-linked (GlcNAc...) asparagine glycosylation is found at asparagine 227 and asparagine 314. Cystine bridges form between cysteine 321–cysteine 332, cysteine 438–cysteine 441, and cysteine 448–cysteine 466. Serine 624 acts as the Charge relay system in catalysis. A disulfide bridge links cysteine 643 with cysteine 755. Asparagine 679 is a glycosylation site (N-linked (GlcNAc...) asparagine). Catalysis depends on charge relay system residues aspartate 702 and histidine 734.

The protein belongs to the peptidase S9B family. As to quaternary structure, homodimer; homodimerization is required for activity of both plasma membrane and soluble forms. The monomer is inactive. Heterodimer with DPP4. Interacts with PLAUR; the interaction occurs at the cell surface of invadopodia membranes. Interacts with ITGB1. Interacts with ITGA3. Associates with integrin alpha-3/beta-1; the association occurs in a collagen-dependent manner at the cell surface of invadopodia membranes. N-glycosylated. Post-translationally, the N-terminus may be blocked. As to expression, expressed in adipose tissue. Expressed in the dermal fibroblasts in the fetal skin. Expressed in the granulation tissue of healing wounds and on reactive stromal fibroblast in epithelial cancers. Expressed in activated fibroblast-like synoviocytes from inflamed synovial tissues. Expressed in activated hepatic stellate cells (HSC) and myofibroblasts from cirrhotic liver, but not detected in normal liver. Expressed in glioma cells (at protein level). Expressed in glioblastomas and glioma cells. Isoform 1 and isoform 2 are expressed in melanoma, carcinoma and fibroblast cell lines.

The protein localises to the cell surface. The protein resides in the cell membrane. It localises to the cell projection. Its subcellular location is the lamellipodium membrane. It is found in the invadopodium membrane. The protein localises to the ruffle membrane. The protein resides in the membrane. It localises to the secreted. Its subcellular location is the cytoplasm. The catalysed reaction is Hydrolysis of Pro-|-Xaa &gt;&gt; Ala-|-Xaa in oligopeptides.. It catalyses the reaction Release of an N-terminal dipeptide, Xaa-Yaa-|-Zaa-, from a polypeptide, preferentially when Yaa is Pro, provided Zaa is neither Pro nor hydroxyproline.. Its activity is regulated as follows. Gelatinase activity is inhibited by serine-protease inhibitors, such as phenylmethylsulfonyl fluoride (PMSF), 4-(2-aminoethyl)-benzenesulfonyl fluoride hydrochloride (AEBSF), 4-amidino phenylsulfonyl fluoride (APSF) and diisopropyl fluorophosphate (DFP), N-ethylmaleimide (NEM) and phenylmethylsulfonyl fluoride (PMSF). Dipeptidyl peptidase activity is inhibited by 2,2'-azino-bis(3-ethylbenzthiazoline-6-sulfonic acid), diisopropylfluorophosphate (DFP). Prolyl endopeptidase activity is inhibited by the boronic acid peptide Ac-Gly-BoroPro, Ac-Gly-Pro-chloromethyl ketone and Thr-Ser-Gly-chloromethyl ketone. In terms of biological role, cell surface glycoprotein serine protease that participates in extracellular matrix degradation and involved in many cellular processes including tissue remodeling, fibrosis, wound healing, inflammation and tumor growth. Both plasma membrane and soluble forms exhibit post-proline cleaving endopeptidase activity, with a marked preference for Ala/Ser-Gly-Pro-Ser/Asn/Ala consensus sequences, on substrate such as alpha-2-antiplasmin SERPINF2 and SPRY2. Degrade also gelatin, heat-denatured type I collagen, but not native collagen type I and IV, vitronectin, tenascin, laminin, fibronectin, fibrin or casein. Also has dipeptidyl peptidase activity, exhibiting the ability to hydrolyze the prolyl bond two residues from the N-terminus of synthetic dipeptide substrates provided that the penultimate residue is proline, with a preference for Ala-Pro, Ile-Pro, Gly-Pro, Arg-Pro and Pro-Pro. Natural neuropeptide hormones for dipeptidyl peptidase are the neuropeptide Y (NPY), peptide YY (PYY), substance P (TAC1) and brain natriuretic peptide 32 (NPPB). The plasma membrane form, in association with either DPP4, PLAUR or integrins, is involved in the pericellular proteolysis of the extracellular matrix (ECM), and hence promotes cell adhesion, migration and invasion through the ECM. Plays a role in tissue remodeling during development and wound healing. Participates in the cell invasiveness towards the ECM in malignant melanoma cancers. Enhances tumor growth progression by increasing angiogenesis, collagen fiber degradation and apoptosis and by reducing antitumor response of the immune system. Promotes glioma cell invasion through the brain parenchyma by degrading the proteoglycan brevican. Acts as a tumor suppressor in melanocytic cells through regulation of cell proliferation and survival in a serine protease activity-independent manner. The protein is Prolyl endopeptidase FAP of Homo sapiens (Human).